The sequence spans 432 residues: Adenylosuccinate synthetase (432 aa).

GTP is bound by residues 13-19 and 41-43; these read GDEGKGK and GHT. Catalysis depends on Asp-14, which acts as the Proton acceptor. Residues Asp-14 and Gly-41 each contribute to the Mg(2+) site. Residues 14-17, 39-42, Thr-130, Arg-144, Gln-225, Thr-240, and Arg-304 contribute to the IMP site; these read DEGK and NAGH. Catalysis depends on His-42, which acts as the Proton donor. Substrate is bound at residue 300-306; that stretch reads AVTGRPR. GTP-binding positions include Arg-306, 332–334, and 415–417; these read KLD and STG.

The protein belongs to the adenylosuccinate synthetase family. Homodimer. It depends on Mg(2+) as a cofactor.

The protein resides in the cytoplasm. It catalyses the reaction IMP + L-aspartate + GTP = N(6)-(1,2-dicarboxyethyl)-AMP + GDP + phosphate + 2 H(+). Its pathway is purine metabolism; AMP biosynthesis via de novo pathway; AMP from IMP: step 1/2. Plays an important role in the de novo pathway of purine nucleotide biosynthesis. Catalyzes the first committed step in the biosynthesis of AMP from IMP. The sequence is that of Adenylosuccinate synthetase from Histophilus somni (strain 2336) (Haemophilus somnus).